The primary structure comprises 105 residues: Large ribosomal subunit protein bL21c (105 aa).

This sequence belongs to the bacterial ribosomal protein bL21 family. As to quaternary structure, part of the 50S ribosomal subunit.

It is found in the plastid. The protein localises to the chloroplast. In terms of biological role, this protein binds to 23S rRNA. The protein is Large ribosomal subunit protein bL21c of Thalassiosira pseudonana (Marine diatom).